Consider the following 612-residue polypeptide: Glutamine--fructose-6-phosphate aminotransferase [isomerizing] (612 aa).

Cys2 acts as the Nucleophile; for GATase activity in catalysis. Residues 2-220 (CGIVGAIRAH…DGDIALLASD (219 aa)) form the Glutamine amidotransferase type-2 domain. SIS domains lie at 288–428 (AKSV…VRGL) and 461–602 (WAQQ…VDKP). Lys607 (for Fru-6P isomerization activity) is an active-site residue.

As to quaternary structure, homodimer.

It is found in the cytoplasm. It carries out the reaction D-fructose 6-phosphate + L-glutamine = D-glucosamine 6-phosphate + L-glutamate. In terms of biological role, catalyzes the first step in hexosamine metabolism, converting fructose-6P into glucosamine-6P using glutamine as a nitrogen source. This chain is Glutamine--fructose-6-phosphate aminotransferase [isomerizing], found in Neisseria meningitidis serogroup B (strain ATCC BAA-335 / MC58).